The primary structure comprises 365 residues: Peptide chain release factor 2 (365 aa).

Gln-252 bears the N5-methylglutamine mark.

It belongs to the prokaryotic/mitochondrial release factor family. In terms of processing, methylated by PrmC. Methylation increases the termination efficiency of RF2.

Its subcellular location is the cytoplasm. Its function is as follows. Peptide chain release factor 2 directs the termination of translation in response to the peptide chain termination codons UGA and UAA. This Pseudoalteromonas translucida (strain TAC 125) protein is Peptide chain release factor 2.